A 425-amino-acid polypeptide reads, in one-letter code: Serine--tRNA ligase (425 aa).

228–230 is an L-serine binding site; the sequence is TSE. 259 to 261 provides a ligand contact to ATP; sequence RSE. Glu-282 serves as a coordination point for L-serine. ATP is bound at residue 346–349; sequence EISS. Ser-384 contacts L-serine.

This sequence belongs to the class-II aminoacyl-tRNA synthetase family. Type-1 seryl-tRNA synthetase subfamily. Homodimer. The tRNA molecule binds across the dimer.

The protein resides in the cytoplasm. It catalyses the reaction tRNA(Ser) + L-serine + ATP = L-seryl-tRNA(Ser) + AMP + diphosphate + H(+). It carries out the reaction tRNA(Sec) + L-serine + ATP = L-seryl-tRNA(Sec) + AMP + diphosphate + H(+). It participates in aminoacyl-tRNA biosynthesis; selenocysteinyl-tRNA(Sec) biosynthesis; L-seryl-tRNA(Sec) from L-serine and tRNA(Sec): step 1/1. In terms of biological role, catalyzes the attachment of serine to tRNA(Ser). Is also able to aminoacylate tRNA(Sec) with serine, to form the misacylated tRNA L-seryl-tRNA(Sec), which will be further converted into selenocysteinyl-tRNA(Sec). This chain is Serine--tRNA ligase, found in Ehrlichia ruminantium (strain Gardel).